The primary structure comprises 196 residues: 7-methyl-GTP pyrophosphatase (196 aa).

The active-site Proton acceptor is the Asp72.

The protein belongs to the Maf family. YceF subfamily. A divalent metal cation is required as a cofactor.

It is found in the cytoplasm. It catalyses the reaction N(7)-methyl-GTP + H2O = N(7)-methyl-GMP + diphosphate + H(+). In terms of biological role, nucleoside triphosphate pyrophosphatase that hydrolyzes 7-methyl-GTP (m(7)GTP). May have a dual role in cell division arrest and in preventing the incorporation of modified nucleotides into cellular nucleic acids. The protein is 7-methyl-GTP pyrophosphatase of Neisseria meningitidis serogroup A / serotype 4A (strain DSM 15465 / Z2491).